A 953-amino-acid polypeptide reads, in one-letter code: Protein translocase subunit SecA (953 aa).

ATP-binding positions include Gln84, 102–106 (GEGKT), and Asp491. The disordered stretch occupies residues 832–953 (EPEPAPEQPS…RAEAKKNKRR (122 aa)). The span at 841–865 (SVPVSVSRSAEPTPDLQAAAEAAAA) shows a compositional bias: low complexity. Positions 898–907 (KGLDAPEKQR) are enriched in basic and acidic residues. Positions 908–934 (LNYSGPTEQGGVQTTSESAGEQGNGTS) are enriched in polar residues. Residues 940 to 953 (RAAARAEAKKNKRR) show a composition bias toward basic and acidic residues.

The protein belongs to the SecA family. Monomer and homodimer. Part of the essential Sec protein translocation apparatus which comprises SecA, SecYEG and auxiliary proteins SecDF. Other proteins may also be involved.

The protein resides in the cell membrane. It is found in the cytoplasm. The enzyme catalyses ATP + H2O + cellular proteinSide 1 = ADP + phosphate + cellular proteinSide 2.. Functionally, part of the Sec protein translocase complex. Interacts with the SecYEG preprotein conducting channel. Has a central role in coupling the hydrolysis of ATP to the transfer of proteins into and across the cell membrane, serving as an ATP-driven molecular motor driving the stepwise translocation of polypeptide chains across the membrane. This is Protein translocase subunit SecA from Saccharopolyspora erythraea (strain ATCC 11635 / DSM 40517 / JCM 4748 / NBRC 13426 / NCIMB 8594 / NRRL 2338).